We begin with the raw amino-acid sequence, 549 residues long: T-complex protein 1 subunit theta (549 aa).

Belongs to the TCP-1 chaperonin family. Heterooligomeric complex of about 850 to 900 kDa that forms two stacked rings, 12 to 16 nm in diameter. Interacts with CCT3, KNAT1, STM and TTG1. In terms of tissue distribution, expressed in shoot meristems, root tip, vasculature and leaf epidermis.

It is found in the cytoplasm. Molecular chaperone; assists the folding of proteins upon ATP hydrolysis. Known to play a role, in vitro, in the folding of actin and tubulin. Contributes to stem cell maintenance through its impact on transcription factors trafficking through plasmodesmata. Probably involved in refolding translocated, partially unfolded proteins, including viral movement proteins. This chain is T-complex protein 1 subunit theta, found in Arabidopsis thaliana (Mouse-ear cress).